The primary structure comprises 69 residues: Conotoxin Eb6.20 (69 aa).

The N-terminal stretch at 1 to 17 (VLIIAVLFLTACQLTTA) is a signal peptide. Positions 18 to 41 (ETYSRGRQKHRARRSTDKNSKWTR) are excised as a propeptide. 3 disulfide bridges follow: C43–C57, C50–C61, and C56–C68.

It belongs to the conotoxin O1 superfamily. As to expression, expressed by the venom duct.

It is found in the secreted. The polypeptide is Conotoxin Eb6.20 (E1) (Conus ebraeus (Hebrew cone)).